The following is a 1196-amino-acid chain: Contactin rig-6 (1196 aa).

Positions 1 to 19 (MMMLIRCISIFLLFGFVNA) are cleaved as a signal peptide. Residues N100 and N195 are each glycosylated (N-linked (GlcNAc...) asparagine). 2 consecutive Ig-like C2-type domains span residues 144 to 225 (PQIS…ARNS) and 232 to 319 (PPIL…CSLS). Disulfide bonds link C169-C220 and C263-C316. A glycan (N-linked (GlcNAc...) asparagine) is linked at N343. 4 Ig-like C2-type domains span residues 355 to 438 (PQIF…VKLR), 441 to 533 (PSIL…ALLT), 539 to 626 (PVFP…VQLI), and 631 to 730 (PSIK…EFVT). Cysteines 372 and 420 form a disulfide. An N-linked (GlcNAc...) asparagine glycan is attached at N457. Intrachain disulfides connect C462–C517 and C562–C610. N644 carries an N-linked (GlcNAc...) asparagine glycan. C653 and C718 are oxidised to a cystine. Fibronectin type-III domains lie at 736-844 (SPIA…TAPG), 849-961 (TIDN…SHGE), 963-1057 (KKVS…TKQH), and 1064-1168 (LIGK…LGSP). N-linked (GlcNAc...) asparagine glycans are attached at residues N895, N925, N945, N974, N979, N986, N1002, and N1092. Residues 1174–1194 (TTGSSDVPIPSLLLLLLLLLW) form a helical membrane-spanning segment. A lipid anchor (GPI-anchor amidated serine) is attached at S1177. A propeptide spans 1178-1196 (SDVPIPSLLLLLLLLLWRL) (removed in mature form).

Belongs to the immunoglobulin superfamily. Contactin family. In terms of assembly, interacts with sax-7; the interaction establishes synaptic connections between neurons. As to expression, expressed in neurons including the I1 and I3 pharyngeal interneurons, NSM and VNC motor neurons, HSN and CAN neurons, the ALM and PLM touch receptor neurons and other unidentified head neurons. Expressed in AVG interneurons. Also expressed in somatic muscles, the excretory canal, the excretory cell and the hypodermis.

The protein localises to the cell membrane. Its subcellular location is the perikaryon. It localises to the cell projection. It is found in the axon. The protein resides in the synapse. The protein localises to the cytoplasm. Probable cell adhesion protein involved in patterning of the nervous system, playing a role in ALM and PLM touch receptor axon growth and VNC axon navigation. By associating with the transmembrane protein sax-7, mediates axonal interactions to establish synaptic connections between the AVG interneuron and the two PHC sensory neurons. Also required for non-neuronal cell migration in the excretory canal, regulating excretory canal elongation and excretory cell morphogenesis. Plays a role in regulating male mating behavior. The protein is Contactin rig-6 of Caenorhabditis elegans.